Here is a 269-residue protein sequence, read N- to C-terminus: Interleukin-1 beta (269 aa).

The propeptide at Met1–Asp116 is removed in mature form; by CASP1. The Involved in interaction with TMED10 C-terminus motif lies at Phe228–Ser241.

It belongs to the IL-1 family. In terms of assembly, monomer. In its precursor form, weakly interacts with full-length MEFV; the mature cytokine does not interact at all. Interacts with integrins ITGAV:ITGBV and ITGA5:ITGB1; integrin-binding is required for IL1B signaling. Interacts with cargo receptor TMED10; the interaction is direct and is required for the secretion of IL1B mature form. Interacts with HSP90AB1; the interaction facilitates cargo translocation into the ERGIC. Interacts with HSP90B1; the interaction facilitates cargo translocation into the ERGIC. In terms of processing, activation of the IL1B precursor involves a CASP1-catalyzed proteolytic cleavage. Processing and secretion are temporarily associated. (Microbial infection) Cleavage by S.pyogenes cysteine protease SpeB promotes its activation independently of CASP1. In terms of tissue distribution, expressed in activated monocytes/macrophages (at protein level).

The protein localises to the cytoplasm. Its subcellular location is the cytosol. The protein resides in the secreted. It localises to the lysosome. It is found in the extracellular exosome. With respect to regulation, (Microbial infection) Cleavage by S.pyogenes cysteine protease SpeB promotes its activation independently of CASP1. SpeB-mediated maturation of IL1B plays a dual role depending on infection site: while IL1B inflammatory response prevents bacterial growth during invasive skin infections, it promotes streptococcal infection of the nasopharynx by disrupting colonization resistance mediated by the microbiota. In terms of biological role, potent pro-inflammatory cytokine. Initially discovered as the major endogenous pyrogen, induces prostaglandin synthesis, neutrophil influx and activation, T-cell activation and cytokine production, B-cell activation and antibody production, and fibroblast proliferation and collagen production. Promotes Th17 differentiation of T-cells. Synergizes with IL12/interleukin-12 to induce IFNG synthesis from T-helper 1 (Th1) cells. Plays a role in angiogenesis by inducing VEGF production synergistically with TNF and IL6. Involved in transduction of inflammation downstream of pyroptosis: its mature form is specifically released in the extracellular milieu by passing through the gasdermin-D (GSDMD) pore. Acts as a sensor of S.pyogenes infection in skin: cleaved and activated by pyogenes SpeB protease, leading to an inflammatory response that prevents bacterial growth during invasive skin infection. The polypeptide is Interleukin-1 beta (Homo sapiens (Human)).